The chain runs to 394 residues: 8-amino-7-oxononanoate synthase (394 aa).

Arginine 21 contacts substrate. 112–113 is a binding site for pyridoxal 5'-phosphate; it reads GY. Position 137 (histidine 137) interacts with substrate. The pyridoxal 5'-phosphate site is built by serine 183, histidine 211, and threonine 239. Lysine 242 is modified (N6-(pyridoxal phosphate)lysine). Threonine 358 lines the substrate pocket.

The protein belongs to the class-II pyridoxal-phosphate-dependent aminotransferase family. BioF subfamily. Homodimer. The cofactor is pyridoxal 5'-phosphate.

The catalysed reaction is 6-carboxyhexanoyl-[ACP] + L-alanine + H(+) = (8S)-8-amino-7-oxononanoate + holo-[ACP] + CO2. Its pathway is cofactor biosynthesis; biotin biosynthesis. Functionally, catalyzes the decarboxylative condensation of pimeloyl-[acyl-carrier protein] and L-alanine to produce 8-amino-7-oxononanoate (AON), [acyl-carrier protein], and carbon dioxide. This chain is 8-amino-7-oxononanoate synthase, found in Burkholderia thailandensis (strain ATCC 700388 / DSM 13276 / CCUG 48851 / CIP 106301 / E264).